Reading from the N-terminus, the 156-residue chain is Transcription factor MafF (156 aa).

Residues 51-76 (RLKQRRRTLKNRGYAASCRVKRVCQK) are basic motif. In terms of domain architecture, bZIP spans 51-114 (RLKQRRRTLK…DALRGKCEAL (64 aa)). The segment at 79 to 93 (LQKQKSELEREVDKL) is leucine-zipper.

It belongs to the bZIP family. Maf subfamily. In terms of assembly, monomer and homo- or heterodimer. Interacts with MIP. Forms high affinity heterodimers with members of the CNC-bZIP family such as NFE2L1/NRF1. Highly expressed in the lung, lower expression in the brain, thymus, liver, spleen, intestine, kidney, heart, muscle, and ovary. Not significantly expressed in hematopoietic cells.

The protein localises to the nucleus. Its function is as follows. Since they lack a putative transactivation domain, the small Mafs behave as transcriptional repressors when they dimerize among themselves. However, they seem to serve as transcriptional activators by dimerizing with other (usually larger) basic-zipper proteins, such as NFE2L1/NRF1, and recruiting them to specific DNA-binding sites. Interacts with the upstream promoter region of the oxytocin receptor gene. May be a transcriptional enhancer in the up-regulation of the oxytocin receptor gene at parturition. This is Transcription factor MafF (Maff) from Mus musculus (Mouse).